A 341-amino-acid chain; its full sequence is L-threonine 3-dehydrogenase (341 aa).

Cysteine 38 contributes to the Zn(2+) binding site. Active-site charge relay system residues include threonine 40 and histidine 43. Positions 63, 64, 93, 96, 99, and 107 each coordinate Zn(2+). NAD(+) contacts are provided by residues isoleucine 175, aspartate 195, arginine 200, 262 to 264 (LGI), and 286 to 287 (IY).

This sequence belongs to the zinc-containing alcohol dehydrogenase family. Homotetramer. The cofactor is Zn(2+).

It is found in the cytoplasm. The catalysed reaction is L-threonine + NAD(+) = (2S)-2-amino-3-oxobutanoate + NADH + H(+). The protein operates within amino-acid degradation; L-threonine degradation via oxydo-reductase pathway; glycine from L-threonine: step 1/2. Catalyzes the NAD(+)-dependent oxidation of L-threonine to 2-amino-3-ketobutyrate. This chain is L-threonine 3-dehydrogenase, found in Marinomonas sp. (strain MWYL1).